The sequence spans 100 residues: MKLSYLSLALAIILVLAIVYSPHMEVKALADAEPDAIGFADAFGEADAEPKRRRRLRKIIRKVIKGTGKVAGEAAASAVAGAAVSAAIDAAVGTTEEPEQ.

Positions 1–17 (MKLSYLSLALAIILVLA) are cleaved as a signal peptide. The propeptide occupies 18–50 (IVYSPHMEVKALADAEPDAIGFADAFGEADAEP). Serine 85 carries an O-linked (GalNAc...) serine glycan. O-linked (GalNAc...) threonine glycans are attached at residues threonine 94 and threonine 95.

This sequence belongs to the formicidae venom precursor-01 superfamily. Post-translationally, glycosylation is critical to maintaining the aqueous solubility of this protein, but does not directly contribute to its activity. Expressed by the venom gland.

It localises to the secreted. The protein localises to the target cell membrane. Neurotoxin that triggers pain behavior and inflammation in mammals, and is paralytic and lethal to insects. Causes a time-dependent increase in cell leak current. May act by targeting membranes. This is U-myrmeciitoxin(01)-Mg7c from Myrmecia gulosa (Red bulldog ant).